The chain runs to 351 residues: Holliday junction branch migration complex subunit RuvB (351 aa).

The segment at 1–186 (MDEKIETRLI…FGIVQRLEFY (186 aa)) is large ATPase domain (RuvB-L). Residues Ile25, Arg26, Gly67, Lys70, Thr71, Thr72, 133 to 135 (EDF), Arg176, Tyr186, and Arg223 contribute to the ATP site. Residue Thr71 participates in Mg(2+) binding. A small ATPAse domain (RuvB-S) region spans residues 187 to 257 (RIPDLIHIVK…IAKEALDLLN (71 aa)). The interval 260 to 351 (IRGLDVMDRK…ENFDLLGKVE (92 aa)) is head domain (RuvB-H). The DNA site is built by Arg296, Arg315, and Arg320.

The protein belongs to the RuvB family. As to quaternary structure, homohexamer. Forms an RuvA(8)-RuvB(12)-Holliday junction (HJ) complex. HJ DNA is sandwiched between 2 RuvA tetramers; dsDNA enters through RuvA and exits via RuvB. An RuvB hexamer assembles on each DNA strand where it exits the tetramer. Each RuvB hexamer is contacted by two RuvA subunits (via domain III) on 2 adjacent RuvB subunits; this complex drives branch migration. In the full resolvosome a probable DNA-RuvA(4)-RuvB(12)-RuvC(2) complex forms which resolves the HJ.

It localises to the cytoplasm. It catalyses the reaction ATP + H2O = ADP + phosphate + H(+). Functionally, the RuvA-RuvB-RuvC complex processes Holliday junction (HJ) DNA during genetic recombination and DNA repair, while the RuvA-RuvB complex plays an important role in the rescue of blocked DNA replication forks via replication fork reversal (RFR). RuvA specifically binds to HJ cruciform DNA, conferring on it an open structure. The RuvB hexamer acts as an ATP-dependent pump, pulling dsDNA into and through the RuvAB complex. RuvB forms 2 homohexamers on either side of HJ DNA bound by 1 or 2 RuvA tetramers; 4 subunits per hexamer contact DNA at a time. Coordinated motions by a converter formed by DNA-disengaged RuvB subunits stimulates ATP hydrolysis and nucleotide exchange. Immobilization of the converter enables RuvB to convert the ATP-contained energy into a lever motion, pulling 2 nucleotides of DNA out of the RuvA tetramer per ATP hydrolyzed, thus driving DNA branch migration. The RuvB motors rotate together with the DNA substrate, which together with the progressing nucleotide cycle form the mechanistic basis for DNA recombination by continuous HJ branch migration. Branch migration allows RuvC to scan DNA until it finds its consensus sequence, where it cleaves and resolves cruciform DNA. The sequence is that of Holliday junction branch migration complex subunit RuvB from Coxiella burnetii (strain CbuG_Q212) (Coxiella burnetii (strain Q212)).